Here is a 688-residue protein sequence, read N- to C-terminus: Ethylmalonyl-CoA mutase (688 aa).

The B12-binding domain maps to 530–659 (TPRLVVGKPG…VGLAKVVERA (130 aa)). His543 contacts adenosylcob(III)alamin. The tract at residues 666-688 (DRADTEAGVPGAPKRNESGAQVF) is disordered.

It belongs to the methylmalonyl-CoA mutase family. The cofactor is adenosylcob(III)alamin.

It catalyses the reaction (2R)-ethylmalonyl-CoA = (2S)-methylsuccinyl-CoA. In terms of biological role, radical enzyme that catalyzes the transformation of (2R)-ethylmalonyl-CoA to (2S)-methylsuccinyl-CoA. Is involved in the ethylmalonyl-CoA pathway for acetyl-CoA assimilation required for M.extorquens growth on one- and two-carbon compounds such as ethylamine, methanol or ethanol as sole carbon source. This enzyme acts as a regulatory metabolic control point in this pathway, that allows M.extorquens to efficiently restore metabolic balance when challenged with a sudden change in the growth substrate. The chain is Ethylmalonyl-CoA mutase from Methylorubrum extorquens (strain ATCC 14718 / DSM 1338 / JCM 2805 / NCIMB 9133 / AM1) (Methylobacterium extorquens).